We begin with the raw amino-acid sequence, 373 residues long: Exonuclease V (373 aa).

Cysteine 92 is a binding site for [4Fe-4S] cluster. 2 residues coordinate Mg(2+): aspartate 182 and glutamate 196. The [4Fe-4S] cluster site is built by cysteine 343, cysteine 346, and cysteine 352.

Belongs to the EXO5 family. Monomer; monomeric form has weak exonuclease activity. Homodimer; homodimeric form is unsure but has much higher exonuclease activity, suggesting that it could homodimerize upon DNA-binding. Interacts with the replication protein A (RPA) complex. Requires [4Fe-4S] cluster as cofactor. It depends on Mg(2+) as a cofactor.

The protein resides in the nucleus. It localises to the cytoplasm. Its subcellular location is the cytosol. Its function is as follows. Single-stranded DNA (ssDNA) bidirectional exonuclease involved in DNA repair. Probably involved in DNA repair following ultraviolet (UV) irradiation and interstrand cross-links (ICLs) damage. Has both 5'-3' and 3'-5' exonuclease activities with a strong preference for 5'-ends. Acts as a sliding exonuclease that loads at ssDNA ends and then slides along the ssDNA prior to cutting; however the sliding and the 3'-5' exonuclease activities are abolished upon binding to the replication protein A (RPA) complex that enforces 5'-directionality activity. The protein is Exonuclease V (EXO5) of Homo sapiens (Human).